Reading from the N-terminus, the 224-residue chain is MEINEKLLRQIIEDVLRDMKGSDKPVSFNAPAASTAPQTAAPAGDGFLTEVGEARQGTQQDEVIIAVGPAFGLAQTVNIVGLPHKSILREVIAGIEEEGIKARVIRCFKSSDVAFVAVEGNRLSGSGISIGIQSKGTTVIHQQGLPPLSNLELFPQAPLLTLETYRQIGKNAARYAKRESPQPVPTLNDQMARPKYQAKSAILHIKETKYVVTGKNPQELRVAL.

The targets protein to the BMC stretch occupies residues 1-18; sequence MEINEKLLRQIIEDVLRD.

This sequence belongs to the diol/glycerol dehydratase medium subunit family. The propanediol dehydratase enzyme is a heterotrimeric complex composed of a large (PduC), a medium (PduD) and a small (PduE) subunit. Requires adenosylcob(III)alamin as cofactor.

Its subcellular location is the bacterial microcompartment. It carries out the reaction propane-1,2-diol = propanal + H2O. It participates in polyol metabolism; 1,2-propanediol degradation. With respect to regulation, inhibited by glycerol. Functionally, part of the PduCDE complex that catalyzes the dehydration of 1,2-propanediol (1,2-PD) to propionaldehyde. Required for S.typhimurium growth on 1,2-PD as the sole carbon and energy source. This subunit is directly targeted to the bacterial microcompartment (BMC) dedicated to 1,2-PD degradation, and is also responsible for targeting the other 2 subunits (pduC and pduE). The 1,2-PD-specific bacterial microcompartment (BMC) concentrates low levels of 1,2-PD catabolic enzymes, concentrates volatile reaction intermediates thus enhancing pathway flux and keeps the level of toxic, mutagenic propionaldehyde low. This Salmonella typhimurium (strain LT2 / SGSC1412 / ATCC 700720) protein is Propanediol dehydratase medium subunit.